Consider the following 136-residue polypeptide: Small ribosomal subunit protein uS9 (136 aa).

Positions 115–136 are disordered; sequence KVKERKKPGLRKARKARQFSKR. Over residues 117–136 the composition is skewed to basic residues; sequence KERKKPGLRKARKARQFSKR.

The protein belongs to the universal ribosomal protein uS9 family.

This chain is Small ribosomal subunit protein uS9, found in Mycoplasmopsis pulmonis (strain UAB CTIP) (Mycoplasma pulmonis).